Consider the following 365-residue polypeptide: Chorismate synthase (365 aa).

Residue arginine 46 coordinates NADP(+). Residues 123 to 125 (RSS), 241 to 242 (NG), glycine 281, 296 to 300 (KPTPS), and arginine 322 each bind FMN.

The protein belongs to the chorismate synthase family. In terms of assembly, homotetramer. It depends on FMNH2 as a cofactor.

It catalyses the reaction 5-O-(1-carboxyvinyl)-3-phosphoshikimate = chorismate + phosphate. The protein operates within metabolic intermediate biosynthesis; chorismate biosynthesis; chorismate from D-erythrose 4-phosphate and phosphoenolpyruvate: step 7/7. Its function is as follows. Catalyzes the anti-1,4-elimination of the C-3 phosphate and the C-6 proR hydrogen from 5-enolpyruvylshikimate-3-phosphate (EPSP) to yield chorismate, which is the branch point compound that serves as the starting substrate for the three terminal pathways of aromatic amino acid biosynthesis. This reaction introduces a second double bond into the aromatic ring system. The sequence is that of Chorismate synthase from Helicobacter pylori (strain J99 / ATCC 700824) (Campylobacter pylori J99).